A 992-amino-acid polypeptide reads, in one-letter code: Vacuolar membrane protease (992 aa).

Residues 1–24 (MSPAMANPRVRKFNPIAFTPLPVT) lie on the Cytoplasmic side of the membrane. A helical membrane pass occupies residues 25–45 (FITTIVYLAVLILVLVTYLVV). Residues 46 to 390 (PPAPTLEMSP…SAFAVFRLHT (345 aa)) lie on the Vacuolar side of the membrane. 3 N-linked (GlcNAc...) asparagine glycosylation sites follow: Asn59, Asn115, and Asn118. Residues His174 and Asp186 each contribute to the Zn(2+) site. Residue Glu220 is the Proton acceptor of the active site. Position 221 (Glu221) interacts with Zn(2+). Asn237 is a glycosylation site (N-linked (GlcNAc...) asparagine). Zn(2+) is bound by residues Glu246 and His319. The helical transmembrane segment at 391–411 (LFALSVTLLVIGPLVLFITSI) threads the bilayer. The Cytoplasmic portion of the chain corresponds to 412-446 (ALSKTDRMYLFSMSKSLGGASETVSLRGLRGLFRT). A helical membrane pass occupies residues 447 to 467 (PIILTVTTVISIGLAYLLEKI). The Vacuolar segment spans residues 468 to 474 (NPYIVHS). Residues 475–495 (SQFAVWSMMLSVWIFVAWFLA) form a helical membrane-spanning segment. The Cytoplasmic portion of the chain corresponds to 496–508 (RVADFFRPSALHR). The chain crosses the membrane as a helical span at residues 509–529 (AYSYTWIFIVTWIMLVISTVY). The Vacuolar portion of the chain corresponds to 530-533 (ANQK). The helical transmembrane segment at 534 to 554 (GIAAGYFTFFYFAAVFLATWV) threads the bilayer. Residues 555–671 (SYLELFSLPR…WSWTLPRWTW (117 aa)) are Cytoplasmic-facing. Residues 579 to 620 (RSSSLSSRLLTPSADELPSDIGPNGAENVGDPDETDPTESTS) are disordered. A helical membrane pass occupies residues 672 to 692 (ILQLLLLAPIVIILVGQVGLL). The Vacuolar portion of the chain corresponds to 693-708 (LTTAMSQIGSDGVSTF). A helical membrane pass occupies residues 709–729 (IVYLACALFSTLLFAPLLPFI). Over 730-736 (HRFTYHV) the chain is Cytoplasmic. The chain crosses the membrane as a helical span at residues 737 to 757 (PIFLLLIFIGTLIYNLVAFPF). Residues 758-992 (SPANRLKIFF…VEASHDFIIQ (235 aa)) lie on the Vacuolar side of the membrane. Residues Asn805, Asn846, and Asn954 are each glycosylated (N-linked (GlcNAc...) asparagine).

Belongs to the peptidase M28 family. Zn(2+) serves as cofactor.

It localises to the vacuole membrane. In terms of biological role, may be involved in vacuolar sorting and osmoregulation. This is Vacuolar membrane protease from Paracoccidioides brasiliensis (strain Pb18).